The sequence spans 94 residues: MLQPIGDRVIVKVKDEEEEKVGGIVLASNAKEKPQMGEIIAVGNGKRNANGDLIPMSVAKGETVFFDKYSGTNLKYEGEKYLVLRESDLLAVVK.

This sequence belongs to the GroES chaperonin family. As to quaternary structure, heptamer of 7 subunits arranged in a ring. Interacts with the chaperonin GroEL.

It localises to the cytoplasm. Functionally, together with the chaperonin GroEL, plays an essential role in assisting protein folding. The GroEL-GroES system forms a nano-cage that allows encapsulation of the non-native substrate proteins and provides a physical environment optimized to promote and accelerate protein folding. GroES binds to the apical surface of the GroEL ring, thereby capping the opening of the GroEL channel. This is Co-chaperonin GroES from Lactobacillus gasseri (strain ATCC 33323 / DSM 20243 / BCRC 14619 / CIP 102991 / JCM 1131 / KCTC 3163 / NCIMB 11718 / NCTC 13722 / AM63).